We begin with the raw amino-acid sequence, 1123 residues long: uncharacterized protein (1123 aa).

Disordered stretches follow at residues 136-229 (LGES…PKLT), 262-471 (MLQY…LNQH), 483-514 (LSSI…SPNL), 527-609 (KKIN…QSDD), 629-769 (SILC…NNIS), 782-812 (LKPK…NSSS), 835-1005 (ITNN…GESN), and 1070-1099 (NNNN…NNNI). Over residues 166–185 (GGNGGNSGTNGDGDDGGCSL) the composition is skewed to gly residues. Residues 190–199 (DENDYEDGMV) show a composition bias toward acidic residues. Residues 211-223 (SGDGGGGGGGGGD) are compositionally biased toward gly residues. Low complexity predominate over residues 262–322 (MLQYQQQQQQ…TTTTHSNNSN (61 aa)). The segment covering 329-343 (PLNNSNSNIHFLTNQ) has biased composition (polar residues). Low complexity-rich tracts occupy residues 344 to 387 (QNSD…SNLN), 397 to 464 (STST…SSSS), 489 to 499 (NNKENNNNNNN), 527 to 548 (KKIN…NISS), and 563 to 585 (HQQQ…QQHQ). Over residues 590-604 (SKSSSELQVPSSNYH) the composition is skewed to polar residues. Residues 632 to 646 (CKDDSKTNTNKDKDN) are compositionally biased toward basic and acidic residues. 2 stretches are compositionally biased toward low complexity: residues 647 to 707 (NNSN…INNN) and 727 to 769 (SVSS…NNIS). Over residues 790 to 799 (SSPSIPTTSP) the composition is skewed to polar residues. 2 stretches are compositionally biased toward low complexity: residues 835-984 (ITNN…NNNI) and 1070-1098 (NNNN…NNNN).

This is an uncharacterized protein from Dictyostelium discoideum (Social amoeba).